The primary structure comprises 153 residues: Penitrem biosynthesis cluster 1 protein I (153 aa).

It functions in the pathway secondary metabolite biosynthesis. Functionally, part of the gene cluster that mediates the biosynthesis of the indole diterpenes penitrems. The geranylgeranyl diphosphate (GGPP) synthase ptmG catalyzes the first step in penitrem biosynthesis via conversion of farnesyl pyrophosphate and isopentyl pyrophosphate into geranylgeranyl pyrophosphate (GGPP). Condensation of indole-3-glycerol phosphate with GGPP by the prenyl transferase ptmC then forms 3-geranylgeranylindole (3-GGI). Epoxidation by the FAD-dependent monooxygenase ptmM leads to a epoxidized-GGI that is substrate of the terpene cyclase ptmB for cyclization to yield paspaline. Paspaline is subsequently converted to 13-desoxypaxilline by the cytochrome P450 monooxygenase ptmP, the latter being then converted to paxilline by the cytochrome P450 monooxygenase ptmQ. Paxilline is converted to beta-paxitriol via C-10 ketoreduction by the short-chain dehydrogenase ptmH which can be monoprenylated at the C-20 by the indole diterpene prenyltransferase ptmD. A two-step elimination (acetylation and elimination) process performed by the O-acetyltransferase ptmV and ptmI leads to the production of the prenylated form of penijanthine. The FAD-linked oxidoreductase ptmO then converts the prenylated form of penijanthine into PC-M5 which is in turn transformed into PC-M4 by the aromatic dimethylallyltransferase ptmE. Five sequential oxidative transformations performed by the cytochrome P450 monooxygenases ptmK, ptmU, ptmL, ptmN and ptmJ yield the various penitrem compounds. PtmK, ptmU and ptmM are involved in the formation of the key bicyclic ring of penitrem C via the formation of the intermediates secopenitrem D and penitrem D. PtmL catalyzes the epoxidation of penitrem D and C to yield penitrem B and F, respectively. PtmJ catalyzes the last benzylic hydroxylation to convert penitrem B to prenitrem E and penitrem F to penitrem A. This chain is Penitrem biosynthesis cluster 1 protein I, found in Penicillium ochrochloron.